We begin with the raw amino-acid sequence, 112 residues long: Large ribosomal subunit protein uL18 (112 aa).

This sequence belongs to the universal ribosomal protein uL18 family. As to quaternary structure, part of the 50S ribosomal subunit; part of the 5S rRNA/L5/L18/L25 subcomplex. Contacts the 5S and 23S rRNAs.

In terms of biological role, this is one of the proteins that bind and probably mediate the attachment of the 5S RNA into the large ribosomal subunit, where it forms part of the central protuberance. The chain is Large ribosomal subunit protein uL18 from Deinococcus deserti (strain DSM 17065 / CIP 109153 / LMG 22923 / VCD115).